The following is a 1378-amino-acid chain: S-cell enriched with leucine-rich repeat-containing protein slrA (1378 aa).

A helical transmembrane segment spans residues 17–37; the sequence is IFKILYCYLFTSLLLILSTWV. N-linked (GlcNAc...) asparagine glycans are attached at residues Asn59, Asn112, Asn143, Asn172, and Asn201. LRR repeat units follow at residues 143 to 165, 167 to 188, 191 to 212, 213 to 235, 236 to 257, 260 to 281, 282 to 304, 307 to 329, and 331 to 353; these read NLTG…LPYL, HLRN…GLLK, SLVA…ADSK, AISY…WKTP, NLLF…EFFR, SLDY…LSKS, RISY…TCWK, SLRI…IFDH, and PLQY…LDCA. N-linked (GlcNAc...) asparagine glycans are attached at residues Asn265, Asn287, and Asn296. Asn416, Asn436, Asn451, Asn491, Asn513, Asn596, Asn605, Asn634, Asn704, Asn710, Asn740, Asn741, Asn771, Asn788, Asn801, Asn826, Asn843, Asn861, Asn875, and Asn907 each carry an N-linked (GlcNAc...) asparagine glycan. A coiled-coil region spans residues 886–946; the sequence is SLNNNNNNNN…NNNENNNENK (61 aa). The segment covering 891-909 has biased composition (low complexity); it reads NNNNNNNNNKNNNNNNNDS. The interval 891-945 is disordered; sequence NNNNNNNNNKNNNNNNNDSNNEKEVVEDEEEDLDYSSQNDNNNINNNNNENNNEN. The segment covering 915–924 has biased composition (acidic residues); that stretch reads VVEDEEEDLD. Residues 929–945 show a composition bias toward low complexity; sequence NDNNNINNNNNENNNEN. Residues Asn953, Asn970, Asn1090, and Asn1100 are each glycosylated (N-linked (GlcNAc...) asparagine). The helical transmembrane segment at 1160–1180 threads the bilayer; it reads YYIVFFGCASGLILVLVICIV. Residues 1227 to 1276 are compositionally biased toward low complexity; the sequence is DLNNNNNNNNNNNNNNNNNNNNNNNNNNNNNNNNNFNDGSDTFNNNNKKN. Residues 1227–1378 are disordered; sequence DLNNNNNNNN…KKHLTIINKK (152 aa). The span at 1289-1304 shows a compositional bias: basic and acidic residues; the sequence is DGKENDIKNINNKKDE. Residues 1305–1324 show a composition bias toward acidic residues; sequence KEDDGDDDDDEDDDEYEDDT. The segment covering 1328–1353 has biased composition (low complexity); that stretch reads SSGNSSRSKGSDGGSSSNSLSSDKQS. Residues Asn1331 and Asn1360 are each glycosylated (N-linked (GlcNAc...) asparagine). Residues 1354–1364 are compositionally biased toward polar residues; it reads FNNGNENNSII. A compositionally biased stretch (basic residues) spans 1368 to 1378; the sequence is KKKHLTIINKK.

The protein resides in the membrane. In Dictyostelium discoideum (Social amoeba), this protein is S-cell enriched with leucine-rich repeat-containing protein slrA (slrA).